A 226-amino-acid chain; its full sequence is 2-C-methyl-D-erythritol 4-phosphate cytidylyltransferase (226 aa).

The protein belongs to the IspD/TarI cytidylyltransferase family. IspD subfamily.

The enzyme catalyses 2-C-methyl-D-erythritol 4-phosphate + CTP + H(+) = 4-CDP-2-C-methyl-D-erythritol + diphosphate. It functions in the pathway isoprenoid biosynthesis; isopentenyl diphosphate biosynthesis via DXP pathway; isopentenyl diphosphate from 1-deoxy-D-xylulose 5-phosphate: step 2/6. Its function is as follows. Catalyzes the formation of 4-diphosphocytidyl-2-C-methyl-D-erythritol from CTP and 2-C-methyl-D-erythritol 4-phosphate (MEP). In Rhodococcus jostii (strain RHA1), this protein is 2-C-methyl-D-erythritol 4-phosphate cytidylyltransferase.